Consider the following 155-residue polypeptide: MLKQVEIFTDGSCLGNPGPGGYGAILRYRGREKTFSAGYTRTTNNRMELMAAIVALEALKEHCEVILSTDSQYVRQGITQWIHNWKKRGWKTADKKPVKNVDLWQRLDAALGQHQIKWEWVKGHAGHPENERCDELARAAAMNPTLEDTGYQVEV.

The RNase H type-1 domain occupies 1 to 142 (MLKQVEIFTD…CDELARAAAM (142 aa)). Positions 10, 48, 70, and 134 each coordinate Mg(2+).

This sequence belongs to the RNase H family. Monomer. Requires Mg(2+) as cofactor.

The protein localises to the cytoplasm. It carries out the reaction Endonucleolytic cleavage to 5'-phosphomonoester.. Its function is as follows. Endonuclease that specifically degrades the RNA of RNA-DNA hybrids. The polypeptide is Ribonuclease H (Escherichia fergusonii (strain ATCC 35469 / DSM 13698 / CCUG 18766 / IAM 14443 / JCM 21226 / LMG 7866 / NBRC 102419 / NCTC 12128 / CDC 0568-73)).